Here is a 77-residue protein sequence, read N- to C-terminus: UPF0401 protein ECP_3010 (77 aa).

It belongs to the UPF0401 family.

This Escherichia coli O6:K15:H31 (strain 536 / UPEC) protein is UPF0401 protein ECP_3010.